A 335-amino-acid chain; its full sequence is GTPase Obg (335 aa).

The Obg domain occupies 1–158 (MFVDQITLEL…RLVELELKLI (158 aa)). In terms of domain architecture, OBG-type G spans 159–334 (ADIGLVGFPN…LYDLFKSKLS (176 aa)). GTP contacts are provided by residues 165-172 (GFPNAGKS), 190-194 (FTTLH), 215-218 (DIPG), 285-288 (NKID), and 315-317 (SGL). Residues Ser172 and Thr192 each contribute to the Mg(2+) site.

This sequence belongs to the TRAFAC class OBG-HflX-like GTPase superfamily. OBG GTPase family. In terms of assembly, monomer. It depends on Mg(2+) as a cofactor.

The protein localises to the cytoplasm. An essential GTPase which binds GTP, GDP and possibly (p)ppGpp with moderate affinity, with high nucleotide exchange rates and a fairly low GTP hydrolysis rate. Plays a role in control of the cell cycle, stress response, ribosome biogenesis and in those bacteria that undergo differentiation, in morphogenesis control. The chain is GTPase Obg from Chlamydia trachomatis serovar L2 (strain ATCC VR-902B / DSM 19102 / 434/Bu).